We begin with the raw amino-acid sequence, 347 residues long: Tetraacyldisaccharide 4'-kinase (347 aa).

65–72 (FVGGTGKT) is a binding site for ATP.

This sequence belongs to the LpxK family.

The catalysed reaction is a lipid A disaccharide + ATP = a lipid IVA + ADP + H(+). It functions in the pathway glycolipid biosynthesis; lipid IV(A) biosynthesis; lipid IV(A) from (3R)-3-hydroxytetradecanoyl-[acyl-carrier-protein] and UDP-N-acetyl-alpha-D-glucosamine: step 6/6. Functionally, transfers the gamma-phosphate of ATP to the 4'-position of a tetraacyldisaccharide 1-phosphate intermediate (termed DS-1-P) to form tetraacyldisaccharide 1,4'-bis-phosphate (lipid IVA). The chain is Tetraacyldisaccharide 4'-kinase from Janthinobacterium sp. (strain Marseille) (Minibacterium massiliensis).